The chain runs to 379 residues: Adenylosuccinate synthetase (379 aa).

GTP-binding positions include Gly11–Lys17 and Gly39–Thr41. Catalysis depends on Asp12, which acts as the Proton acceptor. 2 residues coordinate Mg(2+): Asp12 and Gly39. Residues Asp12–Lys15, Asn37–His40, Thr127, Arg141, Gln223, Thr238, and Arg302 each bind IMP. His40 acts as the Proton donor in catalysis. Residue Thr298–Arg304 coordinates substrate. GTP is bound by residues Arg304 and Lys330–Asp332.

Belongs to the adenylosuccinate synthetase family. As to quaternary structure, homodimer. Requires Mg(2+) as cofactor.

The protein resides in the cytoplasm. It carries out the reaction IMP + L-aspartate + GTP = N(6)-(1,2-dicarboxyethyl)-AMP + GDP + phosphate + 2 H(+). It functions in the pathway purine metabolism; AMP biosynthesis via de novo pathway; AMP from IMP: step 1/2. In terms of biological role, plays an important role in the de novo pathway of purine nucleotide biosynthesis. Catalyzes the first committed step in the biosynthesis of AMP from IMP. In Methanosarcina mazei (strain ATCC BAA-159 / DSM 3647 / Goe1 / Go1 / JCM 11833 / OCM 88) (Methanosarcina frisia), this protein is Adenylosuccinate synthetase.